A 155-amino-acid polypeptide reads, in one-letter code: SsrA-binding protein (155 aa).

A compositionally biased stretch (basic and acidic residues) spans 132 to 147; that stretch reads KRESIKRREQDRDIKR. The segment at 132-155 is disordered; it reads KRESIKRREQDRDIKRQMKQFNGR.

The protein belongs to the SmpB family.

It localises to the cytoplasm. In terms of biological role, required for rescue of stalled ribosomes mediated by trans-translation. Binds to transfer-messenger RNA (tmRNA), required for stable association of tmRNA with ribosomes. tmRNA and SmpB together mimic tRNA shape, replacing the anticodon stem-loop with SmpB. tmRNA is encoded by the ssrA gene; the 2 termini fold to resemble tRNA(Ala) and it encodes a 'tag peptide', a short internal open reading frame. During trans-translation Ala-aminoacylated tmRNA acts like a tRNA, entering the A-site of stalled ribosomes, displacing the stalled mRNA. The ribosome then switches to translate the ORF on the tmRNA; the nascent peptide is terminated with the 'tag peptide' encoded by the tmRNA and targeted for degradation. The ribosome is freed to recommence translation, which seems to be the essential function of trans-translation. This is SsrA-binding protein from Streptococcus mutans serotype c (strain ATCC 700610 / UA159).